Reading from the N-terminus, the 250-residue chain is tRNA pseudouridine synthase A (250 aa).

Residue aspartate 52 is the Nucleophile of the active site. Tyrosine 111 is a substrate binding site.

This sequence belongs to the tRNA pseudouridine synthase TruA family. Homodimer.

It carries out the reaction uridine(38/39/40) in tRNA = pseudouridine(38/39/40) in tRNA. Formation of pseudouridine at positions 38, 39 and 40 in the anticodon stem and loop of transfer RNAs. The protein is tRNA pseudouridine synthase A of Methylobacterium sp. (strain 4-46).